We begin with the raw amino-acid sequence, 175 residues long: Small ribosomal subunit protein bS16 (175 aa).

The protein belongs to the bacterial ribosomal protein bS16 family.

The sequence is that of Small ribosomal subunit protein bS16 from Cytophaga hutchinsonii (strain ATCC 33406 / DSM 1761 / CIP 103989 / NBRC 15051 / NCIMB 9469 / D465).